Here is a 312-residue protein sequence, read N- to C-terminus: Ribonuclease Z (312 aa).

The Zn(2+) site is built by His62, His64, Asp66, His67, His144, Asp215, and His273. Asp66 functions as the Proton acceptor in the catalytic mechanism.

It belongs to the RNase Z family. Homodimer. The cofactor is Zn(2+).

The enzyme catalyses Endonucleolytic cleavage of RNA, removing extra 3' nucleotides from tRNA precursor, generating 3' termini of tRNAs. A 3'-hydroxy group is left at the tRNA terminus and a 5'-phosphoryl group is left at the trailer molecule.. In terms of biological role, zinc phosphodiesterase, which displays some tRNA 3'-processing endonuclease activity. Probably involved in tRNA maturation, by removing a 3'-trailer from precursor tRNA. This Prochlorococcus marinus (strain MIT 9515) protein is Ribonuclease Z.